The primary structure comprises 1149 residues: Golgi apparatus protein 1 homolog (1149 aa).

Residues 1–19 (MWRFPLILASVCWLTTAQQ) form the signal peptide. At 20-1115 (QNVANDPDKK…NLVMEHPERN (1096 aa)) the chain is on the extracellular side. Cys-rich GLG1 repeat units lie at residues 24–69 (NDPD…FSET), 71–135 (TLSE…KNVT), 139–207 (KCHA…VKNA), 216–276 (ILGD…NDKF), 277–344 (MDPE…NQPE), 349–411 (QPSK…ESRN), 415–475 (KLGA…NVDS), 477–549 (DMVP…YDEQ), 551–610 (PLSV…ETDN), 613–676 (RKHP…DAKE), 677–736 (MNNK…FEHK), 743–803 (DLTD…IECL), 809–867 (HLGP…IVRL), 868–938 (LQRE…RQSI), 945–1009 (DFSP…NKGL), and 1010–1070 (IRDK…DKQE). An N-linked (GlcNAc...) asparagine glycan is attached at asparagine 133. The N-linked (GlcNAc...) asparagine glycan is linked to asparagine 411. Residues 1116–1136 (SILGYLAGFIVFILLIGCCCG) traverse the membrane as a helical segment. Topologically, residues 1137 to 1149 (RVSKKQYIEMKNR) are cytoplasmic.

It localises to the membrane. The chain is Golgi apparatus protein 1 homolog from Caenorhabditis elegans.